The following is a 284-amino-acid chain: Phosphatidylglycerol--prolipoprotein diacylglyceryl transferase (284 aa).

Transmembrane regions (helical) follow at residues isoleucine 14–isoleucine 34, tyrosine 62–tyrosine 82, phenylalanine 106–tyrosine 126, leucine 136–isoleucine 156, proline 190–alanine 210, glycine 218–tyrosine 238, and leucine 252–tyrosine 272. A 1,2-diacyl-sn-glycero-3-phospho-(1'-sn-glycerol) is bound at residue arginine 155.

It belongs to the Lgt family.

Its subcellular location is the cell inner membrane. The enzyme catalyses L-cysteinyl-[prolipoprotein] + a 1,2-diacyl-sn-glycero-3-phospho-(1'-sn-glycerol) = an S-1,2-diacyl-sn-glyceryl-L-cysteinyl-[prolipoprotein] + sn-glycerol 1-phosphate + H(+). It functions in the pathway protein modification; lipoprotein biosynthesis (diacylglyceryl transfer). In terms of biological role, catalyzes the transfer of the diacylglyceryl group from phosphatidylglycerol to the sulfhydryl group of the N-terminal cysteine of a prolipoprotein, the first step in the formation of mature lipoproteins. The protein is Phosphatidylglycerol--prolipoprotein diacylglyceryl transferase of Helicobacter pylori (strain ATCC 700392 / 26695) (Campylobacter pylori).